The following is a 691-amino-acid chain: POU domain, class 6, transcription factor 2 (691 aa).

3 disordered regions span residues 1–61, 188–297, and 435–461; these read MIAG…RGNT, QQQQ…LQLV, and GQAA…SALS. Residues 17–28 are compositionally biased toward basic and acidic residues; it reads MNAELRGEDKAA. Composition is skewed to low complexity over residues 188–197 and 206–216; these read QQQQQQQQQQ and QHPQPASQAPP. Positions 217-237 are enriched in pro residues; the sequence is QSQPTPPHQPPPASQQLPAPP. The segment covering 238–272 has biased composition (low complexity); that stretch reads AQLEQATQPQQHQPHSHPQNQTQNQPSPTQQSSSP. Over residues 437–447 the composition is skewed to polar residues; that stretch reads AATSHSPVRQA. The segment covering 448–458 has biased composition (low complexity); the sequence is SSSSSSSSSSS. The POU-specific domain maps to 476-586; that stretch reads VDGVNLEEIR…VLERWMAEAE (111 aa). A DNA-binding region (homeobox) is located at residues 607-666; that stretch reads KRKRRTSFTPQALEILNAHFEKNTHPSGQEMTEIAEKLNYDREVVRVWFCNKRQALKNTI. A disordered region spans residues 670–691; that stretch reads KQHEPTSAAPLEPLADSPEENC.

Belongs to the POU transcription factor family. Class-6 subfamily. As to expression, expressed in kidney, heart, muscle, spleen and ovary, but not in lung.

Its subcellular location is the nucleus. In terms of biological role, probable transcription factor likely to be involved in early steps in the differentiation of amacrine and ganglion cells. Recognizes and binds to the DNA sequence 5'-ATGCAAAT-3'. The polypeptide is POU domain, class 6, transcription factor 2 (Pou6f2) (Mus musculus (Mouse)).